We begin with the raw amino-acid sequence, 514 residues long: Calcium-binding mitochondrial carrier protein SCaMC-2 (514 aa).

Topologically, residues 1-234 (MARPRSLVSP…EKQTGMWWRH (234 aa)) are mitochondrial intermembrane. 4 EF-hand domains span residues 56–91 (EHER…LGVH), 92–122 (RTEL…HYLR), 123–158 (DHEK…LGVN), and 159–194 (ISEQ…HSAE). Ca(2+) is bound by residues Asp69, Asn71, Asp73, Asp80, Asp105, Asp107, Asp109, Gln111, and Glu116. Solcar repeat units follow at residues 229–315 (GMWW…IKRI), 323–408 (LGIH…LKNA), and 420–508 (PGVF…LKLT). Residues 235–252 (LVAGGGAGAVSRTCTAPL) traverse the membrane as a helical segment. Residues 253-289 (DRLKVLMQVHASRSNNMSILGGFTHMIREGGFRSLWR) lie on the Mitochondrial matrix side of the membrane. Residues 290 to 309 (GNGINVIKIAPESAIKFMAY) form a helical membrane-spanning segment. The Mitochondrial intermembrane portion of the chain corresponds to 310-332 (EQIKRIIGSNQETLGIHERFVAG). Residues 333 to 346 (SLAGVIAQSSIYPM) form a helical membrane-spanning segment. Topologically, residues 347 to 382 (EVLKTRMALRKTGQYQGVLDCGKKILLQEGLSAFYK) are mitochondrial matrix. The chain crosses the membrane as a helical span at residues 383-402 (GYVPNMLGIIPYAGIDLAVY). Topologically, residues 403-425 (ETLKNAWLQRYATSSADPGVFVL) are mitochondrial intermembrane. A helical membrane pass occupies residues 426-443 (LACGTVSSTCGQLASYPL). The Mitochondrial matrix segment spans residues 444–482 (ALVRTRMQAEASVEGAPQMTMSKLFKHIVKTEGAFGLYR). The helical transmembrane segment at 483 to 502 (GLAPNFMKVIPAVSISYVVY) threads the bilayer. The Mitochondrial intermembrane portion of the chain corresponds to 503-514 (ENLKLTLGVQSR).

Belongs to the mitochondrial carrier (TC 2.A.29) family.

Its subcellular location is the mitochondrion inner membrane. In terms of biological role, calcium-dependent mitochondrial solute carrier. In Xenopus laevis (African clawed frog), this protein is Calcium-binding mitochondrial carrier protein SCaMC-2 (slc25a25).